A 321-amino-acid polypeptide reads, in one-letter code: Digestive cysteine proteinase 3 (321 aa).

The signal sequence occupies residues 1–16; that stretch reads MKVAALFLCGLALATA. The propeptide at 17-106 is activation peptide; the sequence is SPSWDHFKTQ…AVFTAEAGPM (90 aa). 3 disulfide bridges follow: Cys127-Cys170, Cys161-Cys203, and Cys261-Cys310. Cys130 is an active-site residue. Catalysis depends on residues His268 and Asn288.

The protein belongs to the peptidase C1 family.

Its activity is regulated as follows. Inhibited by E-64, antipain, leupeptin, heavy metal ions, iodoacetic acid, dithionitrobenzene, p-hydroxymercuri-benzoate; activated by mercaptoethanol and dithiothreitol. The protein is Digestive cysteine proteinase 3 (LCP3) of Homarus americanus (American lobster).